Here is a 440-residue protein sequence, read N- to C-terminus: MAATTSKIDDSMPARISSDCPEEIREVLYYAWGHDRSGLKKLLKTTGKATAQDPKTGETPLHAAIRACGPASPDDDGQEEDGSVEEAKDIVHDLFLQGAIWNDVDSNNETPGCLALRLGRKSLYQLCIEAGVRAELLFALMGDYEELSSGSEDGDEEMEVQQDDDEEAPQLVSTEDVEPTVEEPKFIPPDAKEKQVTSEEYLNSKLVYDDAKLVDSDLNGVMMAWETDIMRRSVAALIPDSAPGKRILNIGFGMGIVDGMFAELKPSRHHIIEAHPSVLEHLSKDESKFGPSWEKSGPEEGAFKVHKGKWQDIVPKLLEDGEIYDAIYFDTFGEDYSQLRYFFSECIIGIMDQEGKFSFFNGLGADRKICYDVYTKVVEMQCADAGLDVEWEESDVDMSGLEKAGEGEWEGVRRRYWTLDSKSFEGAAVLRYAVGTSNRL.

A disordered region spans residues 147 to 194 (LSSGSEDGDEEMEVQQDDDEEAPQLVSTEDVEPTVEEPKFIPPDAKEK). A compositionally biased stretch (acidic residues) spans 152–168 (EDGDEEMEVQQDDDEEA). Positions 182 to 194 (EEPKFIPPDAKEK) are enriched in basic and acidic residues. One can recognise an RMT2 domain in the interval 192–440 (KEKQVTSEEY…RYAVGTSNRL (249 aa)). S-adenosyl-L-methionine is bound by residues Y201, M230, 252 to 257 (FGMGIV), 273 to 275 (EAH), 310 to 311 (WQ), and D330.

Belongs to the class I-like SAM-binding methyltransferase superfamily. RMT2 methyltransferase family. Monomer.

It is found in the cytoplasm. The protein localises to the nucleus. Its function is as follows. S-adenosyl-L-methionine-dependent protein-arginine N-methyltransferase that methylates the delta-nitrogen atom of arginine residues to form N5-methylarginine (type IV) in target proteins. Monomethylates ribosomal protein L12. This Gibberella zeae (strain ATCC MYA-4620 / CBS 123657 / FGSC 9075 / NRRL 31084 / PH-1) (Wheat head blight fungus) protein is Protein arginine N-methyltransferase 2.